The sequence spans 300 residues: CDP-diacylglycerol--serine O-phosphatidyltransferase (300 aa).

Transmembrane regions (helical) follow at residues 10–30, 74–94, 95–115, 135–155, 162–182, and 207–227; these read AVNLQILPSSMTVLSICAGLT, IDSLADAVNFGVAPAVVLYAT, MLSTTPVGWVAVLLYPVCVVL, EFFVGMPAPAGAVSVIGLLAL, GWWTSTWFLCIWVTGTSMLLI, and LAIFAAAVVLAPYLLIWVIIL.

It belongs to the CDP-alcohol phosphatidyltransferase class-I family.

The protein localises to the cell membrane. The catalysed reaction is a CDP-1,2-diacyl-sn-glycerol + L-serine = a 1,2-diacyl-sn-glycero-3-phospho-L-serine + CMP + H(+). The chain is CDP-diacylglycerol--serine O-phosphatidyltransferase (pssA) from Mycobacterium leprae (strain TN).